Here is a 382-residue protein sequence, read N- to C-terminus: Cytochrome b (382 aa).

The next 4 membrane-spanning stretches (helical) occupy residues 36–56, 80–101, 116–136, and 181–201; these read FGSLLALCLMIQILTGLFLTM, WLIRTIHANGASFFFICIYLHI, WFIGVIILFMLMATAFMGYVL, and FYTFHFLLPFIILMLTMIHLL. 2 residues coordinate heme b: H86 and H100. Heme b is bound by residues H185 and H199. Residue H204 coordinates a ubiquinone. Helical transmembrane passes span 229 to 249, 291 to 311, 323 to 343, and 350 to 370; these read YKDLIGFLILMMLLLMLTLSN, LGGVIALVMSILILIILPLTF, INQFMFWIFVMMVILLTWIGA, and YIITGQLLTILYFLYFILNPL.

The protein belongs to the cytochrome b family. In terms of assembly, the main subunits of complex b-c1 are: cytochrome b, cytochrome c1 and the Rieske protein. It depends on heme b as a cofactor.

The protein localises to the mitochondrion inner membrane. Component of the ubiquinol-cytochrome c reductase complex (complex III or cytochrome b-c1 complex) that is part of the mitochondrial respiratory chain. The b-c1 complex mediates electron transfer from ubiquinol to cytochrome c. Contributes to the generation of a proton gradient across the mitochondrial membrane that is then used for ATP synthesis. In Samia ricini (Indian eri silkmoth), this protein is Cytochrome b (MT-CYB).